A 454-amino-acid polypeptide reads, in one-letter code: Adenylosuccinate synthetase isozyme 1 B (454 aa).

The interval 1–24 (MSGTRASNDRSSHPGAGGHKRPRY) is disordered. GTP contacts are provided by residues 39 to 45 (GDEGKGK) and 67 to 69 (GHT). Catalysis depends on Asp-40, which acts as the Proton acceptor. Mg(2+) is bound by residues Asp-40 and Gly-67. Asp-40 is a binding site for substrate. IMP is bound by residues 40 to 43 (DEGK), 65 to 68 (NAGH), Thr-160, Arg-174, Asn-253, Thr-268, and Arg-332. The Proton donor role is filled by His-68. 328-334 (VTTGRKR) contributes to the substrate binding site. Residues Arg-334, 360–362 (KLD), and 442–445 (GVGK) contribute to the GTP site.

Belongs to the adenylosuccinate synthetase family. Homodimer. The cofactor is Mg(2+).

It is found in the cytoplasm. The catalysed reaction is IMP + L-aspartate + GTP = N(6)-(1,2-dicarboxyethyl)-AMP + GDP + phosphate + 2 H(+). It functions in the pathway purine metabolism; AMP biosynthesis via de novo pathway; AMP from IMP: step 1/2. Its function is as follows. Component of the purine nucleotide cycle (PNC), which interconverts IMP and AMP to regulate the nucleotide levels in various tissues, and which contributes to glycolysis and ammoniagenesis. Catalyzes the first committed step in the biosynthesis of AMP from IMP. This chain is Adenylosuccinate synthetase isozyme 1 B (adss1-b), found in Xenopus laevis (African clawed frog).